Here is a 113-residue protein sequence, read N- to C-terminus: Hydrogenase maturation factor HybF (113 aa).

Ni(2+)-binding residues include His2 and Glu3. Zn(2+) contacts are provided by Cys73, Cys76, Cys89, and Cys92.

The protein belongs to the HypA/HybF family. HybF subfamily.

In terms of biological role, involved in the maturation of [NiFe] hydrogenases. Required for nickel insertion into the metal center of the hydrogenase. This Salmonella typhi protein is Hydrogenase maturation factor HybF.